Consider the following 193-residue polypeptide: Proteasome subunit beta 1 (193 aa).

Positions 1-4 (MPGA) are cleaved as a propeptide — removed in mature form; by autocatalysis. The active-site Nucleophile is Thr5.

This sequence belongs to the peptidase T1B family. The 20S proteasome core is composed of 14 alpha and 14 beta subunits that assemble into four stacked heptameric rings, resulting in a barrel-shaped structure. The two inner rings, each composed of seven catalytic beta subunits, are sandwiched by two outer rings, each composed of seven alpha subunits. The catalytic chamber with the active sites is on the inside of the barrel. Has a gated structure, the ends of the cylinder being occluded by the N-termini of the alpha-subunits. Is capped at one or both ends by the proteasome regulatory ATPase, PAN.

The protein resides in the cytoplasm. It catalyses the reaction Cleavage of peptide bonds with very broad specificity.. With respect to regulation, the formation of the proteasomal ATPase PAN-20S proteasome complex, via the docking of the C-termini of PAN into the intersubunit pockets in the alpha-rings, triggers opening of the gate for substrate entry. Interconversion between the open-gate and close-gate conformations leads to a dynamic regulation of the 20S proteasome proteolysis activity. Component of the proteasome core, a large protease complex with broad specificity involved in protein degradation. The sequence is that of Proteasome subunit beta 1 from Cenarchaeum symbiosum (strain A).